Reading from the N-terminus, the 262-residue chain is Acyl-[acyl-carrier-protein]--UDP-N-acetylglucosamine O-acyltransferase (262 aa).

The protein belongs to the transferase hexapeptide repeat family. LpxA subfamily. Homotrimer.

The protein resides in the cytoplasm. The catalysed reaction is a (3R)-hydroxyacyl-[ACP] + UDP-N-acetyl-alpha-D-glucosamine = a UDP-3-O-[(3R)-3-hydroxyacyl]-N-acetyl-alpha-D-glucosamine + holo-[ACP]. The protein operates within glycolipid biosynthesis; lipid IV(A) biosynthesis; lipid IV(A) from (3R)-3-hydroxytetradecanoyl-[acyl-carrier-protein] and UDP-N-acetyl-alpha-D-glucosamine: step 1/6. In terms of biological role, involved in the biosynthesis of lipid A, a phosphorylated glycolipid that anchors the lipopolysaccharide to the outer membrane of the cell. The polypeptide is Acyl-[acyl-carrier-protein]--UDP-N-acetylglucosamine O-acyltransferase (Vibrio parahaemolyticus serotype O3:K6 (strain RIMD 2210633)).